Here is a 428-residue protein sequence, read N- to C-terminus: Adenylosuccinate synthetase (428 aa).

GTP-binding positions include 12–18 (GDEGKGK) and 40–42 (GHS). The Proton acceptor role is filled by Asp13. Residues Asp13 and Gly40 each coordinate Mg(2+). IMP contacts are provided by residues 13–16 (DEGK), 38–41 (NAGH), Thr128, Arg142, Gln223, Thr238, and Arg302. The active-site Proton donor is His41. Position 298 to 304 (298 to 304 (VTTGRPR)) interacts with substrate. GTP is bound by residues Arg304, 330 to 332 (KLD), and 412 to 414 (GTG).

The protein belongs to the adenylosuccinate synthetase family. In terms of assembly, homodimer. Requires Mg(2+) as cofactor.

The protein localises to the cytoplasm. The catalysed reaction is IMP + L-aspartate + GTP = N(6)-(1,2-dicarboxyethyl)-AMP + GDP + phosphate + 2 H(+). It functions in the pathway purine metabolism; AMP biosynthesis via de novo pathway; AMP from IMP: step 1/2. In terms of biological role, plays an important role in the de novo pathway of purine nucleotide biosynthesis. Catalyzes the first committed step in the biosynthesis of AMP from IMP. The sequence is that of Adenylosuccinate synthetase from Bifidobacterium longum (strain DJO10A).